A 217-amino-acid polypeptide reads, in one-letter code: GrpE protein homolog 1, mitochondrial (217 aa).

The transit peptide at 1–27 (MAARCVRLARGSLPAFALSLRSSPRLL) directs the protein to the mitochondrion. The residue at position 94 (Lys94) is an N6-acetyllysine; alternate. Lys94 is modified (N6-succinyllysine; alternate). The residue at position 100 (Lys100) is an N6-acetyllysine. Lys120 bears the N6-succinyllysine mark. Lys215 is subject to N6-acetyllysine; alternate. N6-succinyllysine; alternate is present on Lys215.

Belongs to the GrpE family. As to quaternary structure, probable component of the PAM complex at least composed of a mitochondrial HSP70 protein, GRPEL1 or GRPEL2, TIMM44, TIMM16/PAM16 and TIMM14/DNAJC19. Binds to HSP70, HSC70 and HSJ1B.

The protein localises to the mitochondrion matrix. Its function is as follows. Essential component of the PAM complex, a complex required for the translocation of transit peptide-containing proteins from the inner membrane into the mitochondrial matrix in an ATP-dependent manner. Seems to control the nucleotide-dependent binding of mitochondrial HSP70 to substrate proteins. This chain is GrpE protein homolog 1, mitochondrial (GRPEL1), found in Bos taurus (Bovine).